The following is a 282-amino-acid chain: ATP synthase gamma chain (282 aa).

Belongs to the ATPase gamma chain family. As to quaternary structure, F-type ATPases have 2 components, CF(1) - the catalytic core - and CF(0) - the membrane proton channel. CF(1) has five subunits: alpha(3), beta(3), gamma(1), delta(1), epsilon(1). CF(0) has three main subunits: a, b and c.

The protein resides in the cell membrane. Its function is as follows. Produces ATP from ADP in the presence of a proton gradient across the membrane. The gamma chain is believed to be important in regulating ATPase activity and the flow of protons through the CF(0) complex. This Clostridium botulinum (strain Kyoto / Type A2) protein is ATP synthase gamma chain.